A 250-amino-acid chain; its full sequence is Putative (5-formylfuran-3-yl)methyl phosphate synthase (250 aa).

Lys29 (schiff-base intermediate with substrate) is an active-site residue. Catalysis depends on Lys87, which acts as the Proton acceptor.

Belongs to the MfnB family.

It catalyses the reaction 2 D-glyceraldehyde 3-phosphate = 4-(hydroxymethyl)-2-furancarboxaldehyde phosphate + phosphate + 2 H2O. Catalyzes the formation of 4-(hydroxymethyl)-2-furancarboxaldehyde phosphate (4-HFC-P) from two molecules of glyceraldehyde-3-P (GA-3-P). The sequence is that of Putative (5-formylfuran-3-yl)methyl phosphate synthase from Streptomyces griseus subsp. griseus (strain JCM 4626 / CBS 651.72 / NBRC 13350 / KCC S-0626 / ISP 5235).